The sequence spans 176 residues: MAENSDLTSLEESFRKFAIYGDTKATGQEMTGKNWAKLCKDCKVIDGKSVTGTDVDIVFSKVKGKSARVITCEEFKKALEELSGKRFKGKSKEEAYEAICKLVVGKEPVSAGITKPAATGAVDRLTDTSKYTGSHKERFDESGKGKGKGGRETIVENTGYVSSYKLAGTYDAKVKK.

The tract at residues 126–152 (TDTSKYTGSHKERFDESGKGKGKGGRE) is disordered. Residues 134-152 (SHKERFDESGKGKGKGGRE) show a composition bias toward basic and acidic residues.

This sequence belongs to the TPPP family.

It is found in the cytoplasm. It localises to the cytoskeleton. Its function is as follows. Regulator of microtubule dynamic that has microtubule bundling activity. This Xenopus tropicalis (Western clawed frog) protein is Tubulin polymerization-promoting protein family member 3 (tppp3).